Here is a 637-residue protein sequence, read N- to C-terminus: Biosynthetic arginine decarboxylase (637 aa).

Position 101 is an N6-(pyridoxal phosphate)lysine (Lys101). Position 286–296 (286–296) interacts with substrate; it reads VDIGGGLGVDY.

It belongs to the Orn/Lys/Arg decarboxylase class-II family. SpeA subfamily. Mg(2+) is required as a cofactor. Pyridoxal 5'-phosphate serves as cofactor.

The enzyme catalyses L-arginine + H(+) = agmatine + CO2. It participates in amine and polyamine biosynthesis; agmatine biosynthesis; agmatine from L-arginine: step 1/1. Its function is as follows. Catalyzes the biosynthesis of agmatine from arginine. The polypeptide is Biosynthetic arginine decarboxylase (Marinobacter nauticus (strain ATCC 700491 / DSM 11845 / VT8) (Marinobacter aquaeolei)).